The following is a 385-amino-acid chain: Putative UDP-N-acetylglucosamine 2-epimerase (385 aa).

Belongs to the UDP-N-acetylglucosamine 2-epimerase family.

The protein resides in the cytoplasm. It carries out the reaction UDP-N-acetyl-alpha-D-glucosamine = UDP-N-acetyl-alpha-D-mannosamine. The protein is Putative UDP-N-acetylglucosamine 2-epimerase of Clostridium acetobutylicum (strain ATCC 824 / DSM 792 / JCM 1419 / IAM 19013 / LMG 5710 / NBRC 13948 / NRRL B-527 / VKM B-1787 / 2291 / W).